The primary structure comprises 159 residues: MTELCPCGSGIDFADCCSPYLQNIKFAQTAESLMRSRYSAYVKHNADYLITSWHPDCQAEKWRLDIEQSFIVTQWLGLNVITTEKGENDNEAYVEFSACFLDQKSQDKQLIHERSRFLRIDQHWYYIDGVKPIDGIKPQIGRNSPCPCGSGKKYKKCCG.

The protein belongs to the UPF0225 family.

In Photorhabdus laumondii subsp. laumondii (strain DSM 15139 / CIP 105565 / TT01) (Photorhabdus luminescens subsp. laumondii), this protein is UPF0225 protein plu2503.